The following is a 499-amino-acid chain: Glycerol kinase (499 aa).

Threonine 13 lines the ADP pocket. ATP-binding residues include threonine 13, threonine 14, and serine 15. Threonine 13 lines the sn-glycerol 3-phosphate pocket. Position 17 (arginine 17) interacts with ADP. Arginine 83, glutamate 84, tyrosine 135, and aspartate 244 together coordinate sn-glycerol 3-phosphate. Glycerol contacts are provided by arginine 83, glutamate 84, tyrosine 135, aspartate 244, and glutamine 245. ADP-binding residues include threonine 266 and glycine 309. Residues threonine 266, glycine 309, glutamine 313, and glycine 410 each coordinate ATP. 2 residues coordinate ADP: glycine 410 and asparagine 414.

This sequence belongs to the FGGY kinase family. Homotetramer and homodimer (in equilibrium).

The enzyme catalyses glycerol + ATP = sn-glycerol 3-phosphate + ADP + H(+). The protein operates within polyol metabolism; glycerol degradation via glycerol kinase pathway; sn-glycerol 3-phosphate from glycerol: step 1/1. Its activity is regulated as follows. Activated by phosphorylation and inhibited by fructose 1,6-bisphosphate (FBP). Its function is as follows. Key enzyme in the regulation of glycerol uptake and metabolism. Catalyzes the phosphorylation of glycerol to yield sn-glycerol 3-phosphate. The sequence is that of Glycerol kinase from Brevibacillus brevis (strain 47 / JCM 6285 / NBRC 100599).